The chain runs to 224 residues: MNKKTESKEQKRSFRSAIVLAGGRGRRMGMVEKALLEFERKTILERLLENLFRVVDEVILSVRDNSQKEKLFPVLDKFPDREIRFCFDSLEDAGPLEGIRAGLLESRSENSFVCAGDMPFVNPEIVDLLFEKASGHDAAIPRWEERMFEPLHAVYSKKMLPEIEKAFERGKHSVLAPVFQMQDVVFVEVSEIREFDPELRTFVNINTVEDLENMIGHAKEKVGL.

GTP is bound by residues 20–22 (LAG), Lys33, Asp88, and Asp117. A Mg(2+)-binding site is contributed by Asp117.

The protein belongs to the MobA family. The cofactor is Mg(2+).

The protein localises to the cytoplasm. The enzyme catalyses Mo-molybdopterin + GTP + H(+) = Mo-molybdopterin guanine dinucleotide + diphosphate. Its function is as follows. Transfers a GMP moiety from GTP to Mo-molybdopterin (Mo-MPT) cofactor (Moco or molybdenum cofactor) to form Mo-molybdopterin guanine dinucleotide (Mo-MGD) cofactor. This chain is Probable molybdenum cofactor guanylyltransferase, found in Methanosarcina mazei (strain ATCC BAA-159 / DSM 3647 / Goe1 / Go1 / JCM 11833 / OCM 88) (Methanosarcina frisia).